We begin with the raw amino-acid sequence, 297 residues long: MLRLGSHVSMSGKKMLLGASEEAASYGSNTFMIYTGAPQNTRRKPIEELNIEAGLEHMKAHDMDDIVVHAPYIINIGNSVKPETFELGVNFLQSEIERTRALGAKQIVLHPGAHVGEGADKGIKQIIQGLNEALIHDQDVQIALETMAGKGSECGRTFEELAQIIDGVTHNELLSVTFDTCHTHDAGYDIVNDFDGVLNEFDKIIGIDRLKVLHINDSKNERGAHKDRHANIGFGHIGFDALHYVVHHPQLANVPKILETPYVGEDKASKKAPYKWEIAMLKNGEFDPDLLNKIQNS.

Positions 69, 110, 145, 179, 182, 214, 227, 229, and 259 each coordinate Zn(2+).

This sequence belongs to the AP endonuclease 2 family. The cofactor is Zn(2+).

The catalysed reaction is Endonucleolytic cleavage to 5'-phosphooligonucleotide end-products.. Its function is as follows. Endonuclease IV plays a role in DNA repair. It cleaves phosphodiester bonds at apurinic or apyrimidinic (AP) sites, generating a 3'-hydroxyl group and a 5'-terminal sugar phosphate. The chain is Probable endonuclease 4 from Listeria welshimeri serovar 6b (strain ATCC 35897 / DSM 20650 / CCUG 15529 / CIP 8149 / NCTC 11857 / SLCC 5334 / V8).